We begin with the raw amino-acid sequence, 75 residues long: UPF0346 protein OB1736 (75 aa).

It belongs to the UPF0346 family.

In Oceanobacillus iheyensis (strain DSM 14371 / CIP 107618 / JCM 11309 / KCTC 3954 / HTE831), this protein is UPF0346 protein OB1736.